Reading from the N-terminus, the 138-residue chain is Thyrotropin subunit beta (138 aa).

The signal sequence occupies residues 1–20 (MTAIFLMSMLFGLACGQAMS). Intrachain disulfides connect C22/C72, C36/C87, C39/C125, C47/C103, C51/C105, and C108/C115. N43 is a glycosylation site (N-linked (GlcNAc...) asparagine). The propeptide occupies 133–138 (VLEFSI).

It belongs to the glycoprotein hormones subunit beta family. As to quaternary structure, heterodimer of a common alpha chain and a unique beta chain which confers biological specificity to thyrotropin, lutropin, follitropin and gonadotropin.

Its subcellular location is the secreted. In terms of biological role, indispensable for the control of thyroid structure and metabolism. The chain is Thyrotropin subunit beta (TSHB) from Sus scrofa (Pig).